The sequence spans 321 residues: Putative membrane-bound redox modulator Alx (321 aa).

Residues 1 to 6 lie on the Periplasmic side of the membrane; it reads MNTVGT. The chain crosses the membrane as a helical span at residues 7 to 27; the sequence is PLLWGGFAVVVAIMLAIDLLL. Residues 28–43 are Cytoplasmic-facing; the sequence is QGRRGAHAMTMKQAAA. Residues 44-64 form a helical membrane-spanning segment; sequence WSLVWVTLSLLFNAAFWWYLV. Residues 65–89 are Periplasmic-facing; the sequence is QTEGRAVADPQALAFLTGYLIEKSL. A helical membrane pass occupies residues 90–110; sequence AVDNVFVWLMLFSYFSVPAAL. Residues 111–113 lie on the Cytoplasmic side of the membrane; that stretch reads QRR. A helical membrane pass occupies residues 114–134; the sequence is VLVYGVLGAIVLRTIMIFTGS. Trp-135 is a topological domain (periplasmic). A helical transmembrane segment spans residues 136–156; it reads LISQFDWILYIFGAFLLFTGV. The Cytoplasmic portion of the chain corresponds to 157 to 198; sequence KMALAHEDESGIGDKPLVRWLRGHLRMTDTIDNEHFFVRKNG. The chain crosses the membrane as a helical span at residues 199–219; sequence LLYATPLMLVLILVELSDVIF. Topologically, residues 220 to 225 are periplasmic; the sequence is AVDSIP. Residues 226-246 traverse the membrane as a helical segment; it reads AIFAVTTDPFIVLTSNLFAIL. Residues 247-261 lie on the Cytoplasmic side of the membrane; that stretch reads GLRAMYFLLAGVAER. A helical transmembrane segment spans residues 262-282; it reads FSMLKYGLAVILVFIGIKMLI. Residues 283–286 lie on the Periplasmic side of the membrane; it reads VDFY. Residues 287–307 form a helical membrane-spanning segment; it reads HIPIAVSLGVVFGILVMTFII. At 308 to 321 the chain is on the cytoplasmic side; sequence NAWVNYRHDKQRGG.

The protein belongs to the TerC family.

It is found in the cell inner membrane. In terms of biological role, has been proposed to be a redox modulator. This chain is Putative membrane-bound redox modulator Alx, found in Escherichia coli (strain K12).